A 752-amino-acid chain; its full sequence is DNA topoisomerase 4 subunit A (752 aa).

The 464-residue stretch at leucine 31–methionine 494 folds into the Topo IIA-type catalytic domain. Residue tyrosine 120 is the O-(5'-phospho-DNA)-tyrosine intermediate of the active site. The tract at residues tyrosine 472–histidine 492 is disordered. Positions glycine 473–histidine 492 are enriched in basic and acidic residues.

This sequence belongs to the type II topoisomerase GyrA/ParC subunit family. ParC type 1 subfamily. Heterotetramer composed of ParC and ParE.

Its subcellular location is the cell membrane. The enzyme catalyses ATP-dependent breakage, passage and rejoining of double-stranded DNA.. Its function is as follows. Topoisomerase IV is essential for chromosome segregation. It relaxes supercoiled DNA. Performs the decatenation events required during the replication of a circular DNA molecule. In Salmonella typhimurium (strain LT2 / SGSC1412 / ATCC 700720), this protein is DNA topoisomerase 4 subunit A.